A 192-amino-acid chain; its full sequence is Probable thymidylate kinase (192 aa).

7 to 14 (GIDGAGKS) contributes to the ATP binding site.

Belongs to the thymidylate kinase family.

The catalysed reaction is dTMP + ATP = dTDP + ADP. In Methanobrevibacter smithii (strain ATCC 35061 / DSM 861 / OCM 144 / PS), this protein is Probable thymidylate kinase.